Here is a 115-residue protein sequence, read N- to C-terminus: NADH-ubiquinone oxidoreductase chain 3 (115 aa).

Transmembrane regions (helical) follow at residues 4–24 (LTVL…AFWL), 55–75 (FFLV…LLPL), and 87–107 (MMLT…YEWM).

It belongs to the complex I subunit 3 family. Core subunit of respiratory chain NADH dehydrogenase (Complex I) which is composed of 45 different subunits. Interacts with TMEM186. Interacts with TMEM242.

It localises to the mitochondrion inner membrane. It carries out the reaction a ubiquinone + NADH + 5 H(+)(in) = a ubiquinol + NAD(+) + 4 H(+)(out). In terms of biological role, core subunit of the mitochondrial membrane respiratory chain NADH dehydrogenase (Complex I) which catalyzes electron transfer from NADH through the respiratory chain, using ubiquinone as an electron acceptor. Essential for the catalytic activity of complex I. The protein is NADH-ubiquinone oxidoreductase chain 3 of Peromyscus slevini (Slevin's mouse).